A 482-amino-acid chain; its full sequence is Aspartyl/glutamyl-tRNA(Asn/Gln) amidotransferase subunit B (482 aa).

The protein belongs to the GatB/GatE family. GatB subfamily. As to quaternary structure, heterotrimer of A, B and C subunits.

The enzyme catalyses L-glutamyl-tRNA(Gln) + L-glutamine + ATP + H2O = L-glutaminyl-tRNA(Gln) + L-glutamate + ADP + phosphate + H(+). The catalysed reaction is L-aspartyl-tRNA(Asn) + L-glutamine + ATP + H2O = L-asparaginyl-tRNA(Asn) + L-glutamate + ADP + phosphate + 2 H(+). In terms of biological role, allows the formation of correctly charged Asn-tRNA(Asn) or Gln-tRNA(Gln) through the transamidation of misacylated Asp-tRNA(Asn) or Glu-tRNA(Gln) in organisms which lack either or both of asparaginyl-tRNA or glutaminyl-tRNA synthetases. The reaction takes place in the presence of glutamine and ATP through an activated phospho-Asp-tRNA(Asn) or phospho-Glu-tRNA(Gln). The protein is Aspartyl/glutamyl-tRNA(Asn/Gln) amidotransferase subunit B of Methanoregula boonei (strain DSM 21154 / JCM 14090 / 6A8).